The following is a 104-amino-acid chain: Phosphoribosyl-ATP pyrophosphatase (104 aa).

This sequence belongs to the PRA-PH family.

It is found in the cytoplasm. It carries out the reaction 1-(5-phospho-beta-D-ribosyl)-ATP + H2O = 1-(5-phospho-beta-D-ribosyl)-5'-AMP + diphosphate + H(+). It functions in the pathway amino-acid biosynthesis; L-histidine biosynthesis; L-histidine from 5-phospho-alpha-D-ribose 1-diphosphate: step 2/9. The chain is Phosphoribosyl-ATP pyrophosphatase from Rhizobium rhizogenes (strain K84 / ATCC BAA-868) (Agrobacterium radiobacter).